The chain runs to 77 residues: DNA-directed RNA polymerase subunit omega (77 aa).

It belongs to the RNA polymerase subunit omega family. As to quaternary structure, the RNAP catalytic core consists of 2 alpha, 1 beta, 1 beta' and 1 omega subunit. When a sigma factor is associated with the core the holoenzyme is formed, which can initiate transcription.

The enzyme catalyses RNA(n) + a ribonucleoside 5'-triphosphate = RNA(n+1) + diphosphate. Promotes RNA polymerase assembly. Latches the N- and C-terminal regions of the beta' subunit thereby facilitating its interaction with the beta and alpha subunits. The polypeptide is DNA-directed RNA polymerase subunit omega (Dichelobacter nodosus (strain VCS1703A)).